A 240-amino-acid polypeptide reads, in one-letter code: Membrane-spanning 4-domains subfamily A member 7 (240 aa).

The Cytoplasmic segment spans residues 1–47 (MLLQSQTMGVSHSFTPKGITIPQREKPGHMYQNEDYLQNGLPTETTV). A helical membrane pass occupies residues 48-68 (LGTVQILCCLLISSLGAILVF). The Extracellular portion of the chain corresponds to 69 to 83 (APYPSHFNPAISTTL). A helical membrane pass occupies residues 84–104 (MSGYPFLGALCFGITGSLSII). The Cytoplasmic segment spans residues 105–121 (SGKQSTKPFDLSSLTSN). Residues 122–142 (AVSSVTAGAGLFLLADSMVAL) traverse the membrane as a helical segment. Topologically, residues 143–178 (RTASQHCGSEMDYLSSLPYSEYYYPIYEIKDCLLTS) are extracellular. Residues 179-199 (VSLTGVLVVMLIFTVLELLLA) traverse the membrane as a helical segment. At 200–240 (AYSSVFWWKQLYSNNPGSSFSSTQSQDHIQQVKKSSSRSWI) the chain is on the cytoplasmic side. Residues 218 to 240 (SFSSTQSQDHIQQVKKSSSRSWI) are disordered.

The protein belongs to the MS4A family. As to expression, ubiquitous expression in normal tissues. Expression is more elevated in adult liver, lung, spleen, and heart than in their fetal counterparts, and is higher in normal tissues than in the cancerous tissue or cell lines. Low levels of expression were detected in the promonocytic stage, whereas high levels of expression were detected in mature monocytes.

The protein resides in the membrane. May be involved in signal transduction as a component of a multimeric receptor complex. The polypeptide is Membrane-spanning 4-domains subfamily A member 7 (MS4A7) (Homo sapiens (Human)).